The sequence spans 38 residues: Large ribosomal subunit protein bL36A (38 aa).

This sequence belongs to the bacterial ribosomal protein bL36 family.

This chain is Large ribosomal subunit protein bL36A, found in Pseudomonas aeruginosa (strain UCBPP-PA14).